An 825-amino-acid chain; its full sequence is Lon protease (825 aa).

Positions 41 to 237 constitute a Lon N-terminal domain; it reads LPIIFIPNTI…KVIQLLLEQK (197 aa). ATP is bound at residue 388-395; it reads GPPGTGKT. A Lon proteolytic domain is found at 625–805; sequence SNPPGVVTGL…DEVLYEALGL (181 aa). Active-site residues include S711 and K754.

It belongs to the peptidase S16 family. As to quaternary structure, homohexamer. Organized in a ring with a central cavity.

It localises to the cytoplasm. It carries out the reaction Hydrolysis of proteins in presence of ATP.. Functionally, ATP-dependent serine protease that mediates the selective degradation of mutant and abnormal proteins as well as certain short-lived regulatory proteins. Required for cellular homeostasis and for survival from DNA damage and developmental changes induced by stress. Degrades polypeptides processively to yield small peptide fragments that are 5 to 10 amino acids long. Binds to DNA in a double-stranded, site-specific manner. In Methanosphaera stadtmanae (strain ATCC 43021 / DSM 3091 / JCM 11832 / MCB-3), this protein is Lon protease.